The primary structure comprises 353 residues: Protein O-mannose kinase (353 aa).

Topologically, residues 1-19 (MEKKAHFVKRDFPPREAPS) are cytoplasmic. Residues 20-40 (LLLLLLVVAVLLLNALLYLYL) form a helical; Signal-anchor for type II membrane protein membrane-spanning segment. Residues 41 to 353 (GNLHGSSGRA…AAMPSTREML (313 aa)) lie on the Lumenal side of the membrane. In terms of domain architecture, Protein kinase spans 83–353 (VRKLKCVGEG…AAMPSTREML (271 aa)). Residues Asn-163 and Asn-237 are each glycosylated (N-linked (GlcNAc...) asparagine).

This sequence belongs to the protein kinase superfamily. Ser/Thr protein kinase family. STKL subfamily.

The protein resides in the endoplasmic reticulum membrane. The enzyme catalyses 3-O-[beta-D-GalNAc-(1-&gt;3)-beta-D-GlcNAc-(1-&gt;4)-alpha-D-Man]-L-Thr-[protein] + ATP = 3-O-[beta-D-GalNAc-(1-&gt;3)-beta-D-GlcNAc-(1-&gt;4)-(O-6-P-alpha-D-Man)]-Thr-[protein] + ADP + H(+). In terms of biological role, protein O-mannose kinase that specifically mediates phosphorylation at the 6-position of an O-mannose of the trisaccharide (N-acetylgalactosamine (GalNAc)-beta-1,3-N-acetylglucosamine (GlcNAc)-beta-1,4-mannose) to generate phosphorylated O-mannosyl trisaccharide (N-acetylgalactosamine-beta-1,3-N-acetylglucosamine-beta-1,4-(phosphate-6-)mannose). Phosphorylated O-mannosyl trisaccharide is a carbohydrate structure present in alpha-dystroglycan (DAG1), which is required for binding laminin G-like domain-containing extracellular proteins with high affinity. Only shows kinase activity when the GalNAc-beta-3-GlcNAc-beta-terminus is linked to the 4-position of O-mannose, suggesting that this disaccharide serves as the substrate recognition motif. The polypeptide is Protein O-mannose kinase (POMK) (Gallus gallus (Chicken)).